The chain runs to 424 residues: Protein pellino (424 aa).

The disordered stretch occupies residues 1 to 21; the sequence is MVKRTDGTESPILAEDGGDGH. Ser10 is modified (phosphoserine).

The protein belongs to the pellino family. Interacts with pll.

Functionally, scaffold protein involved in the Toll signaling pathway via its interaction with pelle/pll kinase. The polypeptide is Protein pellino (Pli) (Drosophila melanogaster (Fruit fly)).